A 138-amino-acid polypeptide reads, in one-letter code: Putative transcriptional regulatory protein NedR (138 aa).

The interval 1–25 is disordered; sequence MCWGRSWTFGRSSSKGWRPTSSASS. Residues 9–25 are compositionally biased toward polar residues; the sequence is FGRSSSKGWRPTSSASS.

Its function is as follows. May serve as a transcriptional regulator. The sequence is that of Putative transcriptional regulatory protein NedR (nedR) from Micromonospora viridifaciens.